Consider the following 209-residue polypeptide: Uracil phosphoribosyltransferase (209 aa).

Residues Arg-79, Arg-104, and 131 to 139 contribute to the 5-phospho-alpha-D-ribose 1-diphosphate site; that span reads DPMLATGGS. Residues Ile-194 and 199 to 201 each bind uracil; that span reads GDA. Asp-200 serves as a coordination point for 5-phospho-alpha-D-ribose 1-diphosphate.

The protein belongs to the UPRTase family. The cofactor is Mg(2+).

It carries out the reaction UMP + diphosphate = 5-phospho-alpha-D-ribose 1-diphosphate + uracil. It participates in pyrimidine metabolism; UMP biosynthesis via salvage pathway; UMP from uracil: step 1/1. With respect to regulation, allosterically activated by GTP. Its function is as follows. Catalyzes the conversion of uracil and 5-phospho-alpha-D-ribose 1-diphosphate (PRPP) to UMP and diphosphate. The chain is Uracil phosphoribosyltransferase from Symbiobacterium thermophilum (strain DSM 24528 / JCM 14929 / IAM 14863 / T).